Consider the following 365-residue polypeptide: Chorismate synthase (365 aa).

Arginine 48 is an NADP(+) binding site. FMN contacts are provided by residues arginine 125–serine 127, asparagine 238–alanine 239, glycine 278, lysine 293–serine 297, and arginine 319.

This sequence belongs to the chorismate synthase family. As to quaternary structure, homotetramer. FMNH2 serves as cofactor.

The catalysed reaction is 5-O-(1-carboxyvinyl)-3-phosphoshikimate = chorismate + phosphate. It functions in the pathway metabolic intermediate biosynthesis; chorismate biosynthesis; chorismate from D-erythrose 4-phosphate and phosphoenolpyruvate: step 7/7. Functionally, catalyzes the anti-1,4-elimination of the C-3 phosphate and the C-6 proR hydrogen from 5-enolpyruvylshikimate-3-phosphate (EPSP) to yield chorismate, which is the branch point compound that serves as the starting substrate for the three terminal pathways of aromatic amino acid biosynthesis. This reaction introduces a second double bond into the aromatic ring system. This is Chorismate synthase from Ruthia magnifica subsp. Calyptogena magnifica.